The sequence spans 194 residues: MELLSTIRIFSSPNMKDLLIQLSQGKVIIYPTESVFGLGCDPDNKNAISTLLKIKNRSWKKGLILVAANYTQLLKYIDDSCLNETQRSRVFSTWPGPMTWVFPAQANRSYWLTGQFSSVAVRVSHFEPIQRLCLAFGKPLVSTSANLSGQLPARTIEEVHDQLGYKIPIMHEDILGRPNPSKIRDVMTGKLIRE.

In terms of domain architecture, YrdC-like spans Ser-12–Glu-194.

Belongs to the SUA5 family. TsaC subfamily.

The protein localises to the cytoplasm. It catalyses the reaction L-threonine + hydrogencarbonate + ATP = L-threonylcarbamoyladenylate + diphosphate + H2O. Functionally, required for the formation of a threonylcarbamoyl group on adenosine at position 37 (t(6)A37) in tRNAs that read codons beginning with adenine. Catalyzes the conversion of L-threonine, HCO(3)(-)/CO(2) and ATP to give threonylcarbamoyl-AMP (TC-AMP) as the acyladenylate intermediate, with the release of diphosphate. In Blochmanniella pennsylvanica (strain BPEN), this protein is Threonylcarbamoyl-AMP synthase.